We begin with the raw amino-acid sequence, 439 residues long: Xylose isomerase (439 aa).

Catalysis depends on residues H101 and D104. Positions 232, 268, 271, 296, 307, 309, and 339 each coordinate Mg(2+).

This sequence belongs to the xylose isomerase family. In terms of assembly, homotetramer. Mg(2+) serves as cofactor.

It localises to the cytoplasm. It catalyses the reaction alpha-D-xylose = alpha-D-xylulofuranose. This chain is Xylose isomerase, found in Yersinia pseudotuberculosis serotype O:1b (strain IP 31758).